Here is a 334-residue protein sequence, read N- to C-terminus: L-lactate dehydrogenase B chain (334 aa).

Residues 30–58 and Arg100 contribute to the NAD(+) site; that span reads GQVG…MEDR. Residues Arg107, Asn139, and Arg170 each coordinate substrate. Asn139 serves as a coordination point for NAD(+). The Proton acceptor role is filled by His194. Position 249 (Thr249) interacts with substrate.

Belongs to the LDH/MDH superfamily. LDH family. In terms of assembly, homotetramer.

It is found in the cytoplasm. It carries out the reaction (S)-lactate + NAD(+) = pyruvate + NADH + H(+). Its pathway is fermentation; pyruvate fermentation to lactate; (S)-lactate from pyruvate: step 1/1. Its function is as follows. Interconverts simultaneously and stereospecifically pyruvate and lactate with concomitant interconversion of NADH and NAD(+). The sequence is that of L-lactate dehydrogenase B chain (ldhb) from Fundulus heteroclitus (Killifish).